Here is a 368-residue protein sequence, read N- to C-terminus: Phosphoserine aminotransferase (368 aa).

R44 provides a ligand contact to L-glutamate. Residues 78-79 (AT), W104, T157, D179, and Q202 contribute to the pyridoxal 5'-phosphate site. An N6-(pyridoxal phosphate)lysine modification is found at K203. Residue 244–245 (NT) participates in pyridoxal 5'-phosphate binding.

It belongs to the class-V pyridoxal-phosphate-dependent aminotransferase family. SerC subfamily. Homodimer. Pyridoxal 5'-phosphate serves as cofactor.

Its subcellular location is the cytoplasm. The enzyme catalyses O-phospho-L-serine + 2-oxoglutarate = 3-phosphooxypyruvate + L-glutamate. It carries out the reaction 4-(phosphooxy)-L-threonine + 2-oxoglutarate = (R)-3-hydroxy-2-oxo-4-phosphooxybutanoate + L-glutamate. It participates in amino-acid biosynthesis; L-serine biosynthesis; L-serine from 3-phospho-D-glycerate: step 2/3. It functions in the pathway cofactor biosynthesis; pyridoxine 5'-phosphate biosynthesis; pyridoxine 5'-phosphate from D-erythrose 4-phosphate: step 3/5. Catalyzes the reversible conversion of 3-phosphohydroxypyruvate to phosphoserine and of 3-hydroxy-2-oxo-4-phosphonooxybutanoate to phosphohydroxythreonine. This Neisseria gonorrhoeae (strain ATCC 700825 / FA 1090) protein is Phosphoserine aminotransferase.